The chain runs to 477 residues: Stromelysin-1 (477 aa).

A signal peptide spans 1–17 (MKGLPVLLWLCVVVCSS). The propeptide at 18 to 99 (YPLHDSARDD…PRCGVPDVGG (82 aa)) is activation peptide. The Cysteine switch signature appears at 90-97 (PRCGVPDV). Residue cysteine 92 participates in Zn(2+) binding. The Ca(2+) site is built by aspartate 124 and aspartate 158. Zn(2+) contacts are provided by histidine 168 and aspartate 170. 4 residues coordinate Ca(2+): aspartate 175, glycine 176, glycine 178, and valine 180. Histidine 183 provides a ligand contact to Zn(2+). Positions 190, 192, and 194 each coordinate Ca(2+). Histidine 196 lines the Zn(2+) pocket. The Ca(2+) site is built by aspartate 198, aspartate 199, and glutamate 201. Position 218 (histidine 218) interacts with Zn(2+). Glutamate 219 is an active-site residue. The Zn(2+) site is built by histidine 222 and histidine 228. Hemopexin repeat units lie at residues 287 to 336 (SPMC…WPSL), 337 to 383 (PSNM…GLPA), 385 to 433 (VKKI…FPGV), and 434 to 477 (DSRV…WFNC). Cysteine 290 and cysteine 477 are oxidised to a cystine. A Ca(2+)-binding site is contributed by aspartate 297. Residues aspartate 389 and aspartate 438 each contribute to the Ca(2+) site.

Belongs to the peptidase M10A family. Requires Ca(2+) as cofactor. The cofactor is Zn(2+).

It is found in the secreted. Its subcellular location is the extracellular space. The protein resides in the extracellular matrix. The catalysed reaction is Preferential cleavage where P1', P2' and P3' are hydrophobic residues.. Its function is as follows. Metalloproteinase with a rather broad substrate specificity that can degrade fibronectin, laminin, gelatins of type I, III, IV, and V; collagens III, IV, X, and IX, and cartilage proteoglycans. Activates different molecules including growth factors, plasminogen or other matrix metalloproteinases such as MMP9. Once released into the extracellular matrix (ECM), the inactive pro-enzyme is activated by the plasmin cascade signaling pathway. Also acts intracellularly. For example, in dopaminergic neurons, gets activated by the serine protease HTRA2 upon stress and plays a pivotal role in DA neuronal degeneration by mediating microglial activation and alpha-synuclein/SNCA cleavage. In addition, plays a role in immune response and possesses antiviral activity against various viruses. Mechanistically, translocates from the cytoplasm into the cell nucleus upon virus infection to influence NF-kappa-B activities. In Mus musculus (Mouse), this protein is Stromelysin-1 (Mmp3).